The following is a 352-amino-acid chain: Phosphoribosylformylglycinamidine cyclo-ligase (352 aa).

It belongs to the AIR synthase family.

The protein localises to the cytoplasm. It catalyses the reaction 2-formamido-N(1)-(5-O-phospho-beta-D-ribosyl)acetamidine + ATP = 5-amino-1-(5-phospho-beta-D-ribosyl)imidazole + ADP + phosphate + H(+). Its pathway is purine metabolism; IMP biosynthesis via de novo pathway; 5-amino-1-(5-phospho-D-ribosyl)imidazole from N(2)-formyl-N(1)-(5-phospho-D-ribosyl)glycinamide: step 2/2. The polypeptide is Phosphoribosylformylglycinamidine cyclo-ligase (Pseudomonas syringae pv. tomato (strain ATCC BAA-871 / DC3000)).